We begin with the raw amino-acid sequence, 201 residues long: Holliday junction branch migration complex subunit RuvA (201 aa).

Residues 1 to 64 (MYEYIRGQFQ…EDFIGLYGFT (64 aa)) form a domain I region. The tract at residues 65–143 (TREELEMFKL…PDELTSEEGE (79 aa)) is domain II. Residues 144 to 152 (LIEGINDNS) form a flexible linker region. The segment at 153-201 (DYSFNINETLSALMALGYTEKEAQKALEKVDKTLSIENMIKESLKLLMR) is domain III.

Belongs to the RuvA family. Homotetramer. Forms an RuvA(8)-RuvB(12)-Holliday junction (HJ) complex. HJ DNA is sandwiched between 2 RuvA tetramers; dsDNA enters through RuvA and exits via RuvB. An RuvB hexamer assembles on each DNA strand where it exits the tetramer. Each RuvB hexamer is contacted by two RuvA subunits (via domain III) on 2 adjacent RuvB subunits; this complex drives branch migration. In the full resolvosome a probable DNA-RuvA(4)-RuvB(12)-RuvC(2) complex forms which resolves the HJ.

The protein localises to the cytoplasm. The RuvA-RuvB-RuvC complex processes Holliday junction (HJ) DNA during genetic recombination and DNA repair, while the RuvA-RuvB complex plays an important role in the rescue of blocked DNA replication forks via replication fork reversal (RFR). RuvA specifically binds to HJ cruciform DNA, conferring on it an open structure. The RuvB hexamer acts as an ATP-dependent pump, pulling dsDNA into and through the RuvAB complex. HJ branch migration allows RuvC to scan DNA until it finds its consensus sequence, where it cleaves and resolves the cruciform DNA. The chain is Holliday junction branch migration complex subunit RuvA from Clostridium perfringens (strain ATCC 13124 / DSM 756 / JCM 1290 / NCIMB 6125 / NCTC 8237 / Type A).